The following is a 437-amino-acid chain: GTPase Der (437 aa).

2 EngA-type G domains span residues proline 3–glutamate 168 and threonine 178–serine 353. GTP-binding positions include glycine 9–serine 16, aspartate 56–tyrosine 60, asparagine 120–glutamate 123, glycine 184–serine 191, aspartate 231–leucine 235, and asparagine 296–aspartate 299. The KH-like domain maps to arginine 354–lysine 437.

It belongs to the TRAFAC class TrmE-Era-EngA-EngB-Septin-like GTPase superfamily. EngA (Der) GTPase family. Associates with the 50S ribosomal subunit.

Its function is as follows. GTPase that plays an essential role in the late steps of ribosome biogenesis. In Chlorobium phaeobacteroides (strain DSM 266 / SMG 266 / 2430), this protein is GTPase Der.